The sequence spans 207 residues: dTTP/UTP pyrophosphatase (207 aa).

Asp79 (proton acceptor) is an active-site residue.

Belongs to the Maf family. YhdE subfamily. It depends on a divalent metal cation as a cofactor.

It localises to the cytoplasm. It catalyses the reaction dTTP + H2O = dTMP + diphosphate + H(+). It carries out the reaction UTP + H2O = UMP + diphosphate + H(+). In terms of biological role, nucleoside triphosphate pyrophosphatase that hydrolyzes dTTP and UTP. May have a dual role in cell division arrest and in preventing the incorporation of modified nucleotides into cellular nucleic acids. The protein is dTTP/UTP pyrophosphatase of Rhodopseudomonas palustris (strain HaA2).